Here is a 142-residue protein sequence, read N- to C-terminus: Large ribosomal subunit protein uL13 (142 aa).

The protein belongs to the universal ribosomal protein uL13 family. In terms of assembly, part of the 50S ribosomal subunit.

Functionally, this protein is one of the early assembly proteins of the 50S ribosomal subunit, although it is not seen to bind rRNA by itself. It is important during the early stages of 50S assembly. This chain is Large ribosomal subunit protein uL13, found in Pseudomonas putida (strain W619).